Here is a 324-residue protein sequence, read N- to C-terminus: Proto-oncogene Mas (324 aa).

The Extracellular segment spans residues 1-35 (MDQSNMTSFAEEKAMNTSSRNASLGTSHPPIPIVH). N-linked (GlcNAc...) asparagine glycosylation is found at Asn-5, Asn-16, and Asn-21. Residues 36-60 (WVIMSISPLGFVENGILLWFLCFRM) form a helical membrane-spanning segment. At 61 to 64 (RRNP) the chain is on the cytoplasmic side. A helical membrane pass occupies residues 65–86 (FTVYITHLSIADISLLFCIFIL). The Extracellular portion of the chain corresponds to 87–103 (SIDYALDYELSSGHYYT). The chain crosses the membrane as a helical span at residues 104 to 127 (IVTLSVTFLFGYNTGLYLLTAISV). Topologically, residues 128-148 (ERCLSVLYPIWYRCHRPKHQS) are cytoplasmic. Residues 149-171 (AFVCALLWALSCLVTTMEYVMCI) form a helical membrane-spanning segment. Over 172-184 (DSGEESHSQSDCR) the chain is Extracellular. Residues 185–205 (AVIIFIAILSFLVFTPLMLVS) form a helical membrane-spanning segment. Topologically, residues 206-223 (STILVVKIRKNTWASHSS) are cytoplasmic. Residues 224–244 (KLYIVIMVTIIIFLIFAMPMR) traverse the membrane as a helical segment. The Extracellular portion of the chain corresponds to 245 to 262 (VLYLLYYEYWSTFGNLHN). A helical membrane pass occupies residues 263 to 283 (ISLLFSTINSSANPFIYFFVG). At 284–324 (SSKKKRFRESLKVVLTRAFKDEMQPRRQEGNGNTVSIETVV) the chain is on the cytoplasmic side.

It belongs to the G-protein coupled receptor 1 family. Interacts with AGTR1. Interacts with FLNA (via filamin repeat 21); increases PKA-mediated phosphorylation of FLNA. Expressed in platelets.

The protein localises to the cell membrane. In terms of biological role, receptor for angiotensin 1-7. Acts specifically as a functional antagonist of AGTR1 (angiotensin-2 type 1 receptor), although it up-regulates AGTR1 receptor levels. Positive regulation of AGTR1 levels occurs through activation of the G-proteins GNA11 and GNAQ, and stimulation of the protein kinase C signaling cascade. The antagonist effect on AGTR1 function is probably due to AGTR1 being physically altered by MAS1. The sequence is that of Proto-oncogene Mas (Mas1) from Rattus norvegicus (Rat).